The chain runs to 327 residues: Interleukin-12 subunit beta (327 aa).

The N-terminal stretch at 1 to 22 is a signal peptide; the sequence is MCLQQLVISWVSLVWLASPLLA. The Ig-like C2-type domain occupies 23–106; sequence IWELEKNVYV…LSQMLLLLHK (84 aa). A disulfide bond links C50 and C90. 2 N-linked (GlcNAc...) asparagine glycosylation sites follow: N134 and N152. The Fibronectin type-III domain occupies 237–327; it reads PPKNLKMKPS…WSEWATMSCP (91 aa).

The protein belongs to the IL-12B family. In terms of assembly, heterodimer with IL12A; disulfide-linked. The heterodimer is known as interleukin IL-12. Heterodimer with IL23A; disulfide-linked. The heterodimer is known as interleukin IL-23. Also secreted as a monomer. Interacts with NBR1; this interaction promotes IL-12 secretion.

It is found in the secreted. In terms of biological role, cytokine that can act as a growth factor for activated T and NK cells, enhance the lytic activity of NK/lymphokine-activated killer cells, and stimulate the production of IFN-gamma by resting PBMC. Its function is as follows. Associates with IL23A to form the IL-23 interleukin, a heterodimeric cytokine which functions in innate and adaptive immunity. IL-23 may constitute with IL-17 an acute response to infection in peripheral tissues. IL-23 binds to a heterodimeric receptor complex composed of IL12RB1 and IL23R, activates the Jak-Stat signaling cascade, stimulates memory rather than naive T-cells and promotes production of pro-inflammatory cytokines. IL-23 induces autoimmune inflammation and thus may be responsible for autoimmune inflammatory diseases and may be important for tumorigenesis. This chain is Interleukin-12 subunit beta (IL12B), found in Marmota monax (Woodchuck).